The primary structure comprises 237 residues: Ras-related protein RABA3 (237 aa).

35-42 (GDSAVGKT) is a binding site for GTP. The short motif at 57 to 65 (SKSTIGVEF) is the Effector region element. Residues 83-87 (DTAGQ), 141-144 (NKAD), and 172-173 (SA) each bind GTP. 2 S-geranylgeranyl cysteine lipidation sites follow: cysteine 235 and cysteine 237. Cysteine 237 carries the cysteine methyl ester modification.

Belongs to the small GTPase superfamily. Rab family. As to expression, expressed in root tips.

The protein localises to the endosome membrane. The protein resides in the golgi apparatus. It localises to the trans-Golgi network membrane. Its function is as follows. Intracellular vesicle trafficking and protein transport. In Arabidopsis thaliana (Mouse-ear cress), this protein is Ras-related protein RABA3 (RABA3).